We begin with the raw amino-acid sequence, 214 residues long: Peptide methionine sulfoxide reductase B1, chloroplastic (214 aa).

A chloroplast-targeting transit peptide spans 1–53; the sequence is MAMRQYAAATAASSSFRARPRARPSCLPAAALPLAPCCGVAWSRASYRRASVR. Residues 58–81 show a composition bias toward low complexity; sequence ASSSSSSSSSSPSPQGQAQAQAQG. The tract at residues 58–91 is disordered; the sequence is ASSSSSSSSSSPSPQGQAQAQAQGKPNYSTSLTD. In terms of domain architecture, MsrB spans 91–213; sequence DEEWRKRLTK…NSASLKLKKT (123 aa). Residues Cys130, Cys133, Cys179, and Cys182 each coordinate Zn(2+). Catalysis depends on Cys202, which acts as the Nucleophile.

The protein belongs to the MsrB Met sulfoxide reductase family. Zn(2+) is required as a cofactor. Expressed in leaves and flowers.

The protein resides in the plastid. Its subcellular location is the chloroplast. The catalysed reaction is L-methionyl-[protein] + [thioredoxin]-disulfide + H2O = L-methionyl-(R)-S-oxide-[protein] + [thioredoxin]-dithiol. Catalyzes the reduction of methionine sulfoxide (MetSO) to methionine in proteins. Involved in abiotic stress response. Plays a protective role against oxidative stress by restoring activity to proteins that have been inactivated by methionine oxidation. MSRB family specifically reduces the MetSO R-enantiomer. The chain is Peptide methionine sulfoxide reductase B1, chloroplastic from Oryza sativa subsp. japonica (Rice).